We begin with the raw amino-acid sequence, 295 residues long: Protoheme IX farnesyltransferase (295 aa).

A run of 9 helical transmembrane segments spans residues 24–44 (IMYL…GSMH), 45–65 (PFLA…AGAI), 94–114 (SALE…AIAV), 117–137 (ISAA…TIWL), 144–164 (NIVI…AAVT), 171–191 (SFIL…ALSL), 216–236 (KYIL…ALFL), 240–260 (LLYL…AVSV), and 272–292 (MFSY…FCSI).

It belongs to the UbiA prenyltransferase family. Protoheme IX farnesyltransferase subfamily.

It is found in the cell membrane. It catalyses the reaction heme b + (2E,6E)-farnesyl diphosphate + H2O = Fe(II)-heme o + diphosphate. The protein operates within porphyrin-containing compound metabolism; heme O biosynthesis; heme O from protoheme: step 1/1. In terms of biological role, converts heme B (protoheme IX) to heme O by substitution of the vinyl group on carbon 2 of heme B porphyrin ring with a hydroxyethyl farnesyl side group. The polypeptide is Protoheme IX farnesyltransferase (Wolbachia pipientis wMel).